Consider the following 616-residue polypeptide: Dihydroxy-acid dehydratase (616 aa).

D81 contacts Mg(2+). A [2Fe-2S] cluster-binding site is contributed by C122. 2 residues coordinate Mg(2+): D123 and K124. Residue K124 is modified to N6-carboxylysine. C195 is a binding site for [2Fe-2S] cluster. A Mg(2+)-binding site is contributed by E491. S517 functions as the Proton acceptor in the catalytic mechanism.

Belongs to the IlvD/Edd family. Homodimer. [2Fe-2S] cluster is required as a cofactor. Requires Mg(2+) as cofactor.

The catalysed reaction is (2R)-2,3-dihydroxy-3-methylbutanoate = 3-methyl-2-oxobutanoate + H2O. The enzyme catalyses (2R,3R)-2,3-dihydroxy-3-methylpentanoate = (S)-3-methyl-2-oxopentanoate + H2O. The protein operates within amino-acid biosynthesis; L-isoleucine biosynthesis; L-isoleucine from 2-oxobutanoate: step 3/4. It functions in the pathway amino-acid biosynthesis; L-valine biosynthesis; L-valine from pyruvate: step 3/4. In terms of biological role, functions in the biosynthesis of branched-chain amino acids. Catalyzes the dehydration of (2R,3R)-2,3-dihydroxy-3-methylpentanoate (2,3-dihydroxy-3-methylvalerate) into 2-oxo-3-methylpentanoate (2-oxo-3-methylvalerate) and of (2R)-2,3-dihydroxy-3-methylbutanoate (2,3-dihydroxyisovalerate) into 2-oxo-3-methylbutanoate (2-oxoisovalerate), the penultimate precursor to L-isoleucine and L-valine, respectively. This is Dihydroxy-acid dehydratase from Escherichia coli O127:H6 (strain E2348/69 / EPEC).